Reading from the N-terminus, the 289-residue chain is Geranylgeranyl diphosphate synthase (289 aa).

Isopentenyl diphosphate-binding residues include R43 and H73. Positions 80 and 86 each coordinate Mg(2+). Residue R91 coordinates (2E,6E)-farnesyl diphosphate. R92 serves as a coordination point for isopentenyl diphosphate. Positions 170, 171, and 205 each coordinate (2E,6E)-farnesyl diphosphate.

The protein belongs to the FPP/GGPP synthase family. Requires Mg(2+) as cofactor.

It catalyses the reaction isopentenyl diphosphate + (2E,6E)-farnesyl diphosphate = (2E,6E,10E)-geranylgeranyl diphosphate + diphosphate. It functions in the pathway isoprenoid biosynthesis; geranylgeranyl diphosphate biosynthesis; geranylgeranyl diphosphate from farnesyl diphosphate and isopentenyl diphosphate: step 1/1. Catalyzes the condensation of farnesyl diphosphate (FPP) and isopentenyl diphosphate (IPP) to yield geranylgeranyl diphosphate (GGPP) needed for biosynthesis of carotenoids and diterpenes. The chain is Geranylgeranyl diphosphate synthase (crtE) from Rhodobacter capsulatus (strain ATCC BAA-309 / NBRC 16581 / SB1003).